A 149-amino-acid chain; its full sequence is MSKKASILVIQGPNLNLLGTREPDVYGKTTLEDIHQKLGELAKAQSVDLSTFQSNHEGELIDRIQKAKQDGVDFIIINPGAFTHTSVALRDVLAGVAIPFTEVHLSNIHQREEFRKHSYLSDIANGVICGLGAIGYELALQAAIARLQR.

The active-site Proton acceptor is the Tyr26. Residues Asn78, His84, and Asp91 each contribute to the substrate site. The active-site Proton donor is the His104. Substrate-binding positions include 105–106 (LS) and Arg115.

This sequence belongs to the type-II 3-dehydroquinase family. As to quaternary structure, homododecamer.

It catalyses the reaction 3-dehydroquinate = 3-dehydroshikimate + H2O. The protein operates within metabolic intermediate biosynthesis; chorismate biosynthesis; chorismate from D-erythrose 4-phosphate and phosphoenolpyruvate: step 3/7. Catalyzes a trans-dehydration via an enolate intermediate. In Polynucleobacter asymbioticus (strain DSM 18221 / CIP 109841 / QLW-P1DMWA-1) (Polynucleobacter necessarius subsp. asymbioticus), this protein is 3-dehydroquinate dehydratase.